The primary structure comprises 400 residues: Lysophospholipid transporter LplT (400 aa).

A run of 12 helical transmembrane segments spans residues 19-39, 53-73, 91-111, 139-159, 164-184, 195-213, 227-247, 257-277, 281-301, 304-324, 352-372, and 373-393; these read VIVA…ATLA, VLQM…GQIA, AGAA…LVGI, LMEA…GVLA, IAAL…NLFI, SWRL…VVLW, LFWG…PVAL, YLNA…AKLV, TVSR…IFSL, ALLP…FFVV, NSAM…GVPA, and VAIG…LWIW.

Belongs to the major facilitator superfamily. LplT (TC 2.A.1.42) family.

It is found in the cell inner membrane. Functionally, catalyzes the facilitated diffusion of 2-acyl-glycero-3-phosphoethanolamine (2-acyl-GPE) into the cell. The chain is Lysophospholipid transporter LplT from Salmonella newport (strain SL254).